We begin with the raw amino-acid sequence, 326 residues long: N-(2-amino-2-carboxyethyl)-L-glutamate synthase (326 aa).

Residue Lys47 is modified to N6-(pyridoxal phosphate)lysine. Pyridoxal 5'-phosphate-binding positions include Asn77, 185–189, and Ser272; that span reads STTGS.

The protein belongs to the cysteine synthase/cystathionine beta-synthase family. SbnA subfamily. Homodimer. Pyridoxal 5'-phosphate serves as cofactor.

The catalysed reaction is O-phospho-L-serine + L-glutamate = N-[(2S)-2-amino-2-carboxyethyl]-L-glutamate + phosphate + H(+). It participates in siderophore biosynthesis. Functionally, catalyzes the synthesis of N-((2S)-2-amino-2-carboxyethyl)-L-glutamate (ACEGA) from O-phospho-L-serine and L-glutamate. Involved in the biosynthesis of L-2,3-diaminopropionic acid (L-Dap), a precursor of staphyloferrin B and antibiotics. The protein is N-(2-amino-2-carboxyethyl)-L-glutamate synthase (sbnA) of Staphylococcus aureus (strain bovine RF122 / ET3-1).